The following is a 460-amino-acid chain: Cysteine--tRNA ligase (460 aa).

Residue C28 participates in Zn(2+) binding. The short motif at 30 to 40 (MTVYDYCHLGH) is the 'HIGH' region element. The Zn(2+) site is built by C209, H234, and E238. Positions 266 to 270 (KMSKS) match the 'KMSKS' region motif. K269 contributes to the ATP binding site.

The protein belongs to the class-I aminoacyl-tRNA synthetase family. In terms of assembly, monomer. Zn(2+) is required as a cofactor.

The protein localises to the cytoplasm. It catalyses the reaction tRNA(Cys) + L-cysteine + ATP = L-cysteinyl-tRNA(Cys) + AMP + diphosphate. This chain is Cysteine--tRNA ligase, found in Pseudomonas fluorescens (strain Pf0-1).